The sequence spans 354 residues: Holliday junction branch migration complex subunit RuvB (354 aa).

Residues 1 to 22 are disordered; the sequence is MTLQTDDFAPAPARRVVSAAPA. The tract at residues 5–194 is large ATPase domain (RuvB-L); that stretch reads TDDFAPAPAR…FGIVARLEFY (190 aa). Residues 9–22 show a composition bias toward low complexity; sequence APAPARRVVSAAPA. Residues Leu33, Arg34, Gly75, Lys78, Thr79, Thr80, 141-143, Arg184, Tyr194, and Arg231 contribute to the ATP site; that span reads EDY. Thr79 is a binding site for Mg(2+). The interval 195–265 is small ATPAse domain (RuvB-S); that stretch reads SAQELARIVK…IAERALAMLD (71 aa). The segment at 268–354 is head domain (RuvB-H); the sequence is PEGLDVMDRK…GAQAPGLFAV (87 aa). DNA contacts are provided by Arg323 and Arg328.

It belongs to the RuvB family. In terms of assembly, homohexamer. Forms an RuvA(8)-RuvB(12)-Holliday junction (HJ) complex. HJ DNA is sandwiched between 2 RuvA tetramers; dsDNA enters through RuvA and exits via RuvB. An RuvB hexamer assembles on each DNA strand where it exits the tetramer. Each RuvB hexamer is contacted by two RuvA subunits (via domain III) on 2 adjacent RuvB subunits; this complex drives branch migration. In the full resolvosome a probable DNA-RuvA(4)-RuvB(12)-RuvC(2) complex forms which resolves the HJ.

It localises to the cytoplasm. It carries out the reaction ATP + H2O = ADP + phosphate + H(+). Its function is as follows. The RuvA-RuvB-RuvC complex processes Holliday junction (HJ) DNA during genetic recombination and DNA repair, while the RuvA-RuvB complex plays an important role in the rescue of blocked DNA replication forks via replication fork reversal (RFR). RuvA specifically binds to HJ cruciform DNA, conferring on it an open structure. The RuvB hexamer acts as an ATP-dependent pump, pulling dsDNA into and through the RuvAB complex. RuvB forms 2 homohexamers on either side of HJ DNA bound by 1 or 2 RuvA tetramers; 4 subunits per hexamer contact DNA at a time. Coordinated motions by a converter formed by DNA-disengaged RuvB subunits stimulates ATP hydrolysis and nucleotide exchange. Immobilization of the converter enables RuvB to convert the ATP-contained energy into a lever motion, pulling 2 nucleotides of DNA out of the RuvA tetramer per ATP hydrolyzed, thus driving DNA branch migration. The RuvB motors rotate together with the DNA substrate, which together with the progressing nucleotide cycle form the mechanistic basis for DNA recombination by continuous HJ branch migration. Branch migration allows RuvC to scan DNA until it finds its consensus sequence, where it cleaves and resolves cruciform DNA. In Verminephrobacter eiseniae (strain EF01-2), this protein is Holliday junction branch migration complex subunit RuvB.